A 249-amino-acid polypeptide reads, in one-letter code: DNA repair protein RecO (249 aa).

Belongs to the RecO family.

Its function is as follows. Involved in DNA repair and RecF pathway recombination. This is DNA repair protein RecO from Mycoplasma capricolum subsp. capricolum (strain California kid / ATCC 27343 / NCTC 10154).